Consider the following 721-residue polypeptide: Peptide-N(4)-(N-acetyl-beta-glucosaminyl)asparagine amidase (721 aa).

4 residues coordinate Zn(2+): Cys193, Cys196, Cys225, and Cys228. Cys251 acts as the Nucleophile in catalysis. Residues His278 and Asp295 contribute to the active site.

Belongs to the transglutaminase-like superfamily. PNGase family. It depends on Zn(2+) as a cofactor.

It localises to the cytoplasm. It carries out the reaction Hydrolysis of an N(4)-(acetyl-beta-D-glucosaminyl)asparagine residue in which the glucosamine residue may be further glycosylated, to yield a (substituted) N-acetyl-beta-D-glucosaminylamine and a peptide containing an aspartate residue.. Its function is as follows. Specifically deglycosylates the denatured form of N-linked glycoproteins in the cytoplasm and assists their proteasome-mediated degradation. Cleaves the beta-aspartyl-glucosamine (GlcNAc) of the glycan and the amide side chain of Asn, converting Asn to Asp. Prefers proteins containing high-mannose over those bearing complex type oligosaccharides. Can recognize misfolded proteins in the endoplasmic reticulum that are exported to the cytosol to be destroyed and deglycosylate them, while it has no activity toward native proteins. Deglycosylation is a prerequisite for subsequent proteasome-mediated degradation of some, but not all, misfolded glycoproteins. The polypeptide is Peptide-N(4)-(N-acetyl-beta-glucosaminyl)asparagine amidase (PNG1) (Arabidopsis thaliana (Mouse-ear cress)).